Here is a 488-residue protein sequence, read N- to C-terminus: Receptor-like tyrosine-protein kinase kin-15 (488 aa).

The signal sequence occupies residues Met-1–Ser-26. Asn-25 is a glycosylation site (N-linked (GlcNAc...) asparagine). Over Thr-27–Met-50 the chain is Extracellular. The chain crosses the membrane as a helical span at residues Phe-51–Leu-70. Residues Ser-71–Asp-488 lie on the Cytoplasmic side of the membrane. One can recognise a Protein kinase domain in the interval Glu-144–Val-458. Residues Leu-150–Val-158 and Lys-183 each bind ATP. The active-site Proton acceptor is the Asp-319.

This sequence belongs to the protein kinase superfamily. Tyr protein kinase family. In terms of tissue distribution, hypodermal cells.

The protein resides in the cell membrane. The enzyme catalyses L-tyrosyl-[protein] + ATP = O-phospho-L-tyrosyl-[protein] + ADP + H(+). In terms of biological role, may be specifically involved in cell-cell interactions regulating cell fusions that generate the hypodermis during postembryonic development. It has a role in the development of the HYP7 hypodermal syncytium. This chain is Receptor-like tyrosine-protein kinase kin-15 (kin-15), found in Caenorhabditis elegans.